The chain runs to 93 residues: Small ribosomal subunit protein uS19 (93 aa).

Belongs to the universal ribosomal protein uS19 family.

Functionally, protein S19 forms a complex with S13 that binds strongly to the 16S ribosomal RNA. This Desulfitobacterium hafniense (strain Y51) protein is Small ribosomal subunit protein uS19.